We begin with the raw amino-acid sequence, 84 residues long: Putative UPF0320 protein YAL068W-A (84 aa).

The protein belongs to the UPF0320 family.

The protein is Putative UPF0320 protein YAL068W-A of Saccharomyces cerevisiae (strain ATCC 204508 / S288c) (Baker's yeast).